We begin with the raw amino-acid sequence, 245 residues long: Phycocyanobilin:ferredoxin oxidoreductase (245 aa).

This sequence belongs to the HY2 family.

The catalysed reaction is (2R,3Z)-phycocyanobilin + 4 oxidized [2Fe-2S]-[ferredoxin] = biliverdin IXalpha + 4 reduced [2Fe-2S]-[ferredoxin] + 4 H(+). Its function is as follows. Catalyzes the four-electron reduction of biliverdin IX-alpha (2-electron reduction at both the A and D rings); the reaction proceeds via an isolatable 2-electron intermediate, 181,182-dihydrobiliverdin. The sequence is that of Phycocyanobilin:ferredoxin oxidoreductase from Rippkaea orientalis (strain PCC 8801 / RF-1) (Cyanothece sp. (strain PCC 8801)).